A 224-amino-acid chain; its full sequence is Ribosomal RNA large subunit methyltransferase E (224 aa).

S-adenosyl-L-methionine is bound by residues glycine 64, tryptophan 66, aspartate 97, aspartate 113, and aspartate 138. Lysine 178 (proton acceptor) is an active-site residue.

The protein belongs to the class I-like SAM-binding methyltransferase superfamily. RNA methyltransferase RlmE family.

It is found in the cytoplasm. It carries out the reaction uridine(2552) in 23S rRNA + S-adenosyl-L-methionine = 2'-O-methyluridine(2552) in 23S rRNA + S-adenosyl-L-homocysteine + H(+). Functionally, specifically methylates the uridine in position 2552 of 23S rRNA at the 2'-O position of the ribose in the fully assembled 50S ribosomal subunit. The protein is Ribosomal RNA large subunit methyltransferase E of Albidiferax ferrireducens (strain ATCC BAA-621 / DSM 15236 / T118) (Rhodoferax ferrireducens).